The following is a 594-amino-acid chain: MFRDKYCAEVKEEEIGKEISLCGWVFRRRDHGGLIFIDLRDRTGIIQVVFSPEISIEMHQKAHGLRSEYVIAVKGILKKRPEGTENPELITGNVELWAKELEILSFSKPLPFQLDEMAEVSELLRLKYRYLDLRRAEMQKNFLLRHRITMAVRNFLDSKGFVEVETPMLTKSTPEGARDFLVPSRLNPGTFYALPQSPQLFKQILMMSGFDRYFQIVRCFRDEDLRADRQPEFTQIDFEMSFVKPEDIIEIVEEMLFKCFKEVLEVDIEIPFKRLTYEEAINKYGSDKPDLRFALEIQDVSELVKNSQFKVFLDTIEKGGVVKAICGKGLASLSRSEIDKLTALAQSFGAKGLAWIKVKNGFESPIVKFFSESLLREIAEKVGVEDGDMILFVADKKSLANEVLGRLRLEIAERAQIKKEGFYFAWVLDFPLFEWDEEEKRFVSMHHPFTSPKDEDIDKLLKIPQEAFYDPQSSVKDIKAKAYDIVLNGYELGGGSIRIHKADIQEHIFRILAISEEEIKRRFGFFVEALRYGAPPHGGIALGLDRLVMVMTGANSLRDVIAFPKTQKAFCPLSEAPSEVNLKQLRELHIKLDI.

Glutamate 175 contacts L-aspartate. The tract at residues 199–202 (QLFK) is aspartate. Arginine 221 serves as a coordination point for L-aspartate. ATP contacts are provided by residues 221-223 (RDE) and glutamine 230. Histidine 446 is a binding site for L-aspartate. Glutamate 491 contributes to the ATP binding site. Arginine 498 is a binding site for L-aspartate. 543 to 546 (GLDR) contacts ATP.

Belongs to the class-II aminoacyl-tRNA synthetase family. Type 1 subfamily. Homodimer.

It localises to the cytoplasm. The enzyme catalyses tRNA(Asx) + L-aspartate + ATP = L-aspartyl-tRNA(Asx) + AMP + diphosphate. Aspartyl-tRNA synthetase with relaxed tRNA specificity since it is able to aspartylate not only its cognate tRNA(Asp) but also tRNA(Asn). Reaction proceeds in two steps: L-aspartate is first activated by ATP to form Asp-AMP and then transferred to the acceptor end of tRNA(Asp/Asn). This is Aspartate--tRNA(Asp/Asn) ligase from Thermodesulfovibrio yellowstonii (strain ATCC 51303 / DSM 11347 / YP87).